Consider the following 875-residue polypeptide: Serine/threonine-protein kinase ATG1 (875 aa).

Positions 22 to 318 (YSIGPEIGKG…FNEFFNDPLI (297 aa)) constitute a Protein kinase domain. Residues 28–36 (IGKGSFATV) and lysine 51 each bind ATP. The Proton acceptor role is filled by aspartate 168. Positions 367 to 379 (EKSKQDLPAREVS) are enriched in basic and acidic residues. Disordered stretches follow at residues 367-422 (EKSK…QPHN) and 470-515 (INPR…DRRI). Polar residues predominate over residues 380 to 389 (THASESQTKA). Residues 390-405 (VDTRPSSRDEEIKEII) show a composition bias toward basic and acidic residues. 3 stretches are compositionally biased toward polar residues: residues 406-420 (NKNSPGPETSRSIQP), 473-490 (RRTSSGSDNSYNGPNNMQ), and 497-508 (LRSNSSGSQRRP).

This sequence belongs to the protein kinase superfamily. Ser/Thr protein kinase family. APG1/unc-51/ULK1 subfamily. In terms of assembly, homodimer. Forms a ternary complex with ATG13 and ATG17.

Its subcellular location is the cytoplasm. The protein localises to the preautophagosomal structure membrane. It carries out the reaction L-seryl-[protein] + ATP = O-phospho-L-seryl-[protein] + ADP + H(+). The catalysed reaction is L-threonyl-[protein] + ATP = O-phospho-L-threonyl-[protein] + ADP + H(+). Serine/threonine protein kinase involved in the cytoplasm to vacuole transport (Cvt) and found to be essential in autophagy, where it is required for the formation of autophagosomes. Involved in the clearance of protein aggregates which cannot be efficiently cleared by the proteasome. Required for selective autophagic degradation of the nucleus (nucleophagy) as well as for mitophagy which contributes to regulate mitochondrial quantity and quality by eliminating the mitochondria to a basal level to fulfill cellular energy requirements and preventing excess ROS production. Also involved in endoplasmic reticulum-specific autophagic process, in selective removal of ER-associated degradation (ERAD) substrates. Plays a key role in ATG9 and ATG23 cycling through the pre-autophagosomal structure and is necessary to promote ATG18 binding to ATG9 through phosphorylation of ATG9. Catalyzes phosphorylation of ATG4, decreasing the interaction between ATG4 and ATG8 and impairing deconjugation of PE-conjugated forms of ATG8. The sequence is that of Serine/threonine-protein kinase ATG1 from Debaryomyces hansenii (strain ATCC 36239 / CBS 767 / BCRC 21394 / JCM 1990 / NBRC 0083 / IGC 2968) (Yeast).